We begin with the raw amino-acid sequence, 101 residues long: Large ribosomal subunit protein uL24 (101 aa).

Belongs to the universal ribosomal protein uL24 family. In terms of assembly, part of the 50S ribosomal subunit.

Its function is as follows. One of two assembly initiator proteins, it binds directly to the 5'-end of the 23S rRNA, where it nucleates assembly of the 50S subunit. Functionally, one of the proteins that surrounds the polypeptide exit tunnel on the outside of the subunit. This Cereibacter sphaeroides (strain ATCC 17025 / ATH 2.4.3) (Rhodobacter sphaeroides) protein is Large ribosomal subunit protein uL24.